We begin with the raw amino-acid sequence, 1238 residues long: Multifunctional 2-oxoglutarate metabolism enzyme (1238 aa).

Positions 1-41 (MANISSPFGQNEWLVEEMYRKFRDDPSSVDPSWHEFLVDYN) are 2-oxoglutarate dehydrogenase E1, N-terminal part. Residues 42 to 97 (PESTAEPVLTDPTSTDKQPSATPQAKPAAAADPVASRAKPATTPTVANGTAAGSAA) form a linker region. A disordered region spans residues 44 to 108 (STAEPVLTDP…PAKTTTTPPI (65 aa)). Residues 59-107 (QPSATPQAKPAAAADPVASRAKPATTPTVANGTAAGSAAAPAKTTTTPP) are compositionally biased toward low complexity. A succinyltransferase E2 region spans residues 98-346 (APAKTTTTPP…LRTIHEMVLS (249 aa)). His-325 (proton acceptor; for succinyltransferase activity) is an active-site residue. Residues 347 to 1238 (DSFWDEIFRE…QQEILDTAFG (892 aa)) form a 2-oxoglutarate dehydrogenase E1, C-terminal part region. Arg-551 contacts thiamine diphosphate. Residues His-590 and Ser-615 each contribute to the 2-oxoglutarate site. The thiamine diphosphate site is built by Ser-615, Leu-617, Asp-657, Ala-658, Ala-659, and Asn-690. Asp-657 provides a ligand contact to Mg(2+). The Mg(2+) site is built by Asn-690 and Ile-692. A coiled-coil region spans residues 795–825 (DISLKEAEDALRDYQGQLERVFNEVRDLEKH). 2-oxoglutarate is bound at residue His-1032. Thr-1050, Arg-1066, Lys-1101, Ser-1104, Gln-1154, Arg-1161, and Arg-1162 together coordinate acetyl-CoA.

It belongs to the 2-oxoacid dehydrogenase family. Kgd subfamily. In terms of assembly, homodimer. The 2-oxoglutarate dehydrogenase (ODH) complex contains multiple copies of three enzymatic components: 2-oxoglutarate dehydrogenase (E1), dihydrolipoamide succinyltransferase (E2) and lipoamide dehydrogenase (E3). Mg(2+) is required as a cofactor. Thiamine diphosphate serves as cofactor.

The catalysed reaction is glyoxylate + 2-oxoglutarate + H(+) = 2-hydroxy-3-oxoadipate + CO2. It catalyses the reaction 2-oxoglutarate + H(+) = succinate semialdehyde + CO2. It carries out the reaction N(6)-[(R)-lipoyl]-L-lysyl-[protein] + 2-oxoglutarate + H(+) = N(6)-[(R)-S(8)-succinyldihydrolipoyl]-L-lysyl-[protein] + CO2. The enzyme catalyses N(6)-[(R)-dihydrolipoyl]-L-lysyl-[protein] + succinyl-CoA = N(6)-[(R)-S(8)-succinyldihydrolipoyl]-L-lysyl-[protein] + CoA. It participates in carbohydrate metabolism; tricarboxylic acid cycle; succinate from 2-oxoglutarate (transferase route): step 1/2. It functions in the pathway carbohydrate metabolism; tricarboxylic acid cycle; succinyl-CoA from 2-oxoglutarate (dehydrogenase route): step 1/1. Alpha-ketoglutarate dehydrogenase and decarboxylase activities are inhibited by unphosphorylated GarA, and allosterically activated by acetyl-CoA, the main substrate of the TCA cycle. In terms of biological role, shows three enzymatic activities that share a first common step, the attack of thiamine-PP on 2-oxoglutarate (alpha-ketoglutarate, KG), leading to the formation of an enamine-thiamine-PP intermediate upon decarboxylation. Thus, displays KGD activity, catalyzing the decarboxylation from five-carbon 2-oxoglutarate to four-carbon succinate semialdehyde (SSA). Also catalyzes C-C bond formation between the activated aldehyde formed after decarboxylation of alpha-ketoglutarate and the carbonyl of glyoxylate (GLX), to yield 2-hydroxy-3-oxoadipate (HOA), which spontaneously decarboxylates to form 5-hydroxylevulinate (HLA). And is also a component of the 2-oxoglutarate dehydrogenase (ODH) complex, that catalyzes the overall conversion of 2-oxoglutarate to succinyl-CoA and CO(2). The KG decarboxylase and KG dehydrogenase reactions provide two alternative, tightly regulated, pathways connecting the oxidative and reductive branches of the TCA cycle. The protein is Multifunctional 2-oxoglutarate metabolism enzyme (kgd) of Mycobacterium leprae (strain TN).